Here is a 257-residue protein sequence, read N- to C-terminus: Small ribosomal subunit protein uS2 (257 aa).

It belongs to the universal ribosomal protein uS2 family.

The protein is Small ribosomal subunit protein uS2 of Bartonella henselae (strain ATCC 49882 / DSM 28221 / CCUG 30454 / Houston 1) (Rochalimaea henselae).